A 188-amino-acid polypeptide reads, in one-letter code: dCTP deaminase (188 aa).

Residues 111-116, 135-137, glutamine 156, tyrosine 170, and glutamine 180 each bind dCTP; these read KSTYAR and TLE. Glutamate 137 serves as the catalytic Proton donor/acceptor.

The protein belongs to the dCTP deaminase family. Homotrimer.

The enzyme catalyses dCTP + H2O + H(+) = dUTP + NH4(+). It functions in the pathway pyrimidine metabolism; dUMP biosynthesis; dUMP from dCTP (dUTP route): step 1/2. In terms of biological role, catalyzes the deamination of dCTP to dUTP. The chain is dCTP deaminase from Nitrosococcus oceani (strain ATCC 19707 / BCRC 17464 / JCM 30415 / NCIMB 11848 / C-107).